The primary structure comprises 398 residues: 4-hydroxy-3-methylbut-2-enyl diphosphate reductase (398 aa).

C66 serves as a coordination point for [4Fe-4S] cluster. H96 lines the (2E)-4-hydroxy-3-methylbut-2-enyl diphosphate pocket. Dimethylallyl diphosphate is bound at residue H96. Residue H96 coordinates isopentenyl diphosphate. Position 157 (C157) interacts with [4Fe-4S] cluster. H185 contacts (2E)-4-hydroxy-3-methylbut-2-enyl diphosphate. Position 185 (H185) interacts with dimethylallyl diphosphate. An isopentenyl diphosphate-binding site is contributed by H185. E187 serves as the catalytic Proton donor. Residue T250 participates in (2E)-4-hydroxy-3-methylbut-2-enyl diphosphate binding. C288 is a binding site for [4Fe-4S] cluster. 4 residues coordinate (2E)-4-hydroxy-3-methylbut-2-enyl diphosphate: S317, S318, N319, and S380. Dimethylallyl diphosphate-binding residues include S317, S318, N319, and S380. Residues S317, S318, N319, and S380 each coordinate isopentenyl diphosphate.

This sequence belongs to the IspH family. Requires [4Fe-4S] cluster as cofactor.

The catalysed reaction is isopentenyl diphosphate + 2 oxidized [2Fe-2S]-[ferredoxin] + H2O = (2E)-4-hydroxy-3-methylbut-2-enyl diphosphate + 2 reduced [2Fe-2S]-[ferredoxin] + 2 H(+). The enzyme catalyses dimethylallyl diphosphate + 2 oxidized [2Fe-2S]-[ferredoxin] + H2O = (2E)-4-hydroxy-3-methylbut-2-enyl diphosphate + 2 reduced [2Fe-2S]-[ferredoxin] + 2 H(+). It functions in the pathway isoprenoid biosynthesis; dimethylallyl diphosphate biosynthesis; dimethylallyl diphosphate from (2E)-4-hydroxy-3-methylbutenyl diphosphate: step 1/1. The protein operates within isoprenoid biosynthesis; isopentenyl diphosphate biosynthesis via DXP pathway; isopentenyl diphosphate from 1-deoxy-D-xylulose 5-phosphate: step 6/6. Catalyzes the conversion of 1-hydroxy-2-methyl-2-(E)-butenyl 4-diphosphate (HMBPP) into a mixture of isopentenyl diphosphate (IPP) and dimethylallyl diphosphate (DMAPP). Acts in the terminal step of the DOXP/MEP pathway for isoprenoid precursor biosynthesis. This chain is 4-hydroxy-3-methylbut-2-enyl diphosphate reductase, found in Prochlorococcus marinus (strain AS9601).